Consider the following 105-residue polypeptide: MATIQQQKIRIRLKAFDRRLLDTSCEKIVDTANRTGATAIGPIPLPTKRRIYCLLRSPHVDKDSREHFETRTHRRIVDIYQPSSKTIDALMKLDLPAGVDIEVKL.

Belongs to the universal ribosomal protein uS10 family. As to quaternary structure, part of the 30S ribosomal subunit.

Functionally, involved in the binding of tRNA to the ribosomes. This chain is Small ribosomal subunit protein uS10, found in Trichodesmium erythraeum (strain IMS101).